The chain runs to 222 residues: S-crystallin SL20-1 (222 aa).

Positions proline 2 to glycine 80 constitute a GST N-terminal domain. Positions asparagine 82–tryptophan 222 constitute a GST C-terminal domain.

It belongs to the GST superfamily. Lens.

S-crystallins are structural components of squids and octopi eye lens. Contains relatively little if any GST activity. This chain is S-crystallin SL20-1, found in Nototodarus sloanii (Wellington flying squid).